The following is a 471-amino-acid chain: Mannose-1-phosphate guanylyltransferase (471 aa).

This sequence belongs to the mannose-6-phosphate isomerase type 2 family.

The catalysed reaction is alpha-D-mannose 1-phosphate + GTP + H(+) = GDP-alpha-D-mannose + diphosphate. It participates in nucleotide-sugar biosynthesis; GDP-alpha-D-mannose biosynthesis; GDP-alpha-D-mannose from alpha-D-mannose 1-phosphate (GTP route): step 1/1. Its function is as follows. Involved in GDP-mannose biosynthesis which serves as the activated sugar nucleotide precursor for mannose residues in cell surface polysaccharides. This enzyme participates in synthesis of the LPS O antigen. The chain is Mannose-1-phosphate guanylyltransferase (manC) from Salmonella montevideo.